Here is a 394-residue protein sequence, read N- to C-terminus: uncharacterized protein (394 aa).

The next 12 membrane-spanning stretches (helical) occupy residues 13-35 (AIIG…VPVL), 50-72 (VGVA…GWLS), 79-97 (LIIN…IAWS), 107-129 (GRGL…ELVL), 136-158 (IMGL…SPII), 168-190 (FLIN…PASL), 218-240 (INLS…PVEL), 250-272 (VPEI…CICF), 277-299 (VLYS…GIFL), 309-331 (ILGL…ALVN), 344-366 (AIYS…ILFS), and 371-393 (FEVL…LYLI).

It belongs to the major facilitator superfamily.

The protein resides in the cell membrane. This is an uncharacterized protein from Buchnera aphidicola subsp. Baizongia pistaciae (strain Bp).